Consider the following 1416-residue polypeptide: DNA-directed RNA polymerase subunit beta (1416 aa).

Residues Ala1388–Ala1416 form a disordered region.

It belongs to the RNA polymerase beta chain family. In terms of assembly, the RNAP catalytic core consists of 2 alpha, 1 beta, 1 beta' and 1 omega subunit. When a sigma factor is associated with the core the holoenzyme is formed, which can initiate transcription.

The catalysed reaction is RNA(n) + a ribonucleoside 5'-triphosphate = RNA(n+1) + diphosphate. DNA-dependent RNA polymerase catalyzes the transcription of DNA into RNA using the four ribonucleoside triphosphates as substrates. This is DNA-directed RNA polymerase subunit beta from Anaeromyxobacter sp. (strain Fw109-5).